A 158-amino-acid polypeptide reads, in one-letter code: Large ribosomal subunit protein bL19 (158 aa).

Positions 119 to 129 are enriched in basic and acidic residues; it reads SDRSRVMKDAA. The interval 119–158 is disordered; sequence SDRSRVMKDAARAQQARDAAQGNSSSETQSSTAAVETQGE. Over residues 130-139 the composition is skewed to low complexity; that stretch reads RAQQARDAAQ. Positions 140-158 are enriched in polar residues; the sequence is GNSSSETQSSTAAVETQGE.

Belongs to the bacterial ribosomal protein bL19 family.

This protein is located at the 30S-50S ribosomal subunit interface and may play a role in the structure and function of the aminoacyl-tRNA binding site. The sequence is that of Large ribosomal subunit protein bL19 from Deinococcus geothermalis (strain DSM 11300 / CIP 105573 / AG-3a).